We begin with the raw amino-acid sequence, 446 residues long: Adenylosuccinate synthetase (446 aa).

Residues 12–18 and 40–42 each bind GTP; these read GDEGKGK and GHT. The active-site Proton acceptor is aspartate 13. Residues aspartate 13 and glycine 40 each contribute to the Mg(2+) site. Residues 13-16, 38-41, threonine 128, arginine 142, glutamine 223, threonine 238, and arginine 302 each bind IMP; these read DEGK and NAGH. The active-site Proton donor is histidine 41. Residue 298–304 coordinates substrate; it reads TTTGRRR. GTP-binding positions include arginine 304, 330–332, and 412–414; these read KLD and SLG.

It belongs to the adenylosuccinate synthetase family. As to quaternary structure, homodimer. The cofactor is Mg(2+).

It localises to the cytoplasm. It catalyses the reaction IMP + L-aspartate + GTP = N(6)-(1,2-dicarboxyethyl)-AMP + GDP + phosphate + 2 H(+). It functions in the pathway purine metabolism; AMP biosynthesis via de novo pathway; AMP from IMP: step 1/2. Its function is as follows. Plays an important role in the de novo pathway of purine nucleotide biosynthesis. Catalyzes the first committed step in the biosynthesis of AMP from IMP. The chain is Adenylosuccinate synthetase from Crocosphaera subtropica (strain ATCC 51142 / BH68) (Cyanothece sp. (strain ATCC 51142)).